The chain runs to 347 residues: Phosphate acyltransferase (347 aa).

This sequence belongs to the PlsX family. In terms of assembly, homodimer. Probably interacts with PlsY.

The protein localises to the cytoplasm. It catalyses the reaction a fatty acyl-[ACP] + phosphate = an acyl phosphate + holo-[ACP]. The protein operates within lipid metabolism; phospholipid metabolism. In terms of biological role, catalyzes the reversible formation of acyl-phosphate (acyl-PO(4)) from acyl-[acyl-carrier-protein] (acyl-ACP). This enzyme utilizes acyl-ACP as fatty acyl donor, but not acyl-CoA. This chain is Phosphate acyltransferase, found in Pediococcus pentosaceus (strain ATCC 25745 / CCUG 21536 / LMG 10740 / 183-1w).